The chain runs to 275 residues: 3-methyl-2-oxobutanoate hydroxymethyltransferase (275 aa).

Positions 49 and 88 each coordinate Mg(2+). Residues 49 to 50 (DS), Asp-88, and Lys-118 each bind 3-methyl-2-oxobutanoate. Residue Glu-120 participates in Mg(2+) binding. The active-site Proton acceptor is the Glu-187.

This sequence belongs to the PanB family. In terms of assembly, homodecamer; pentamer of dimers. It depends on Mg(2+) as a cofactor.

Its subcellular location is the cytoplasm. It catalyses the reaction 3-methyl-2-oxobutanoate + (6R)-5,10-methylene-5,6,7,8-tetrahydrofolate + H2O = 2-dehydropantoate + (6S)-5,6,7,8-tetrahydrofolate. The protein operates within cofactor biosynthesis; (R)-pantothenate biosynthesis; (R)-pantoate from 3-methyl-2-oxobutanoate: step 1/2. Its function is as follows. Catalyzes the reversible reaction in which hydroxymethyl group from 5,10-methylenetetrahydrofolate is transferred onto alpha-ketoisovalerate to form ketopantoate. The polypeptide is 3-methyl-2-oxobutanoate hydroxymethyltransferase (Nitrobacter hamburgensis (strain DSM 10229 / NCIMB 13809 / X14)).